The chain runs to 439 residues: 26S rRNA (cytosine-C(5))-methyltransferase nsun-5 (439 aa).

Residues aspartate 266, aspartate 293, and aspartate 313 each contribute to the S-adenosyl-L-methionine site. Catalysis depends on cysteine 366, which acts as the Nucleophile.

The protein belongs to the class I-like SAM-binding methyltransferase superfamily. RsmB/NOP family.

The catalysed reaction is a cytidine in 26S rRNA + S-adenosyl-L-methionine = a 5-methylcytidine in 26S rRNA + S-adenosyl-L-homocysteine + H(+). Functionally, S-adenosyl-L-methionine-dependent methyltransferase which methylates the carbon-5 position of cytosine 2381 to 5-methylcytosine (m5C2381) in 26S rRNA. Plays a role in the production of mature 5S, 5.8S, 18S and 26S rRNAs and promotes the processing of the internally transcribed spacer 2 (ITS2), which separates the 5.8S and 26S rRNAs on large pre-rRNA precursors. May play a role in the translation of leucine and proline codons. May play a role in maintaining ribosomal frameshifting in response to osmotic stress. Not required for global translation. The polypeptide is 26S rRNA (cytosine-C(5))-methyltransferase nsun-5 (Caenorhabditis elegans).